Consider the following 253-residue polypeptide: Vitamin B12 import ATP-binding protein BtuD (253 aa).

An ABC transporter domain is found at 3–237; sequence LDAKNLAMPP…EQLESTFATQ (235 aa). 31–38 is an ATP binding site; sequence GPNGSGKS.

This sequence belongs to the ABC transporter superfamily. Vitamin B12 importer (TC 3.A.1.13.1) family. In terms of assembly, the complex is composed of two ATP-binding proteins (BtuD), two transmembrane proteins (BtuC) and a solute-binding protein (BtuF).

Its subcellular location is the cell inner membrane. It catalyses the reaction an R-cob(III)alamin(out) + ATP + H2O = an R-cob(III)alamin(in) + ADP + phosphate + H(+). Its function is as follows. Part of the ABC transporter complex BtuCDF involved in vitamin B12 import. Responsible for energy coupling to the transport system. The polypeptide is Vitamin B12 import ATP-binding protein BtuD (Photobacterium profundum (strain SS9)).